A 450-amino-acid polypeptide reads, in one-letter code: Tubulin alpha chain (450 aa).

Gln-11 is a GTP binding site. Lys-40 carries the N6-acetyllysine modification. GTP is bound by residues Glu-71, Gly-144, Thr-145, Thr-179, Asn-206, and Asn-228. Position 71 (Glu-71) interacts with Mg(2+). Glu-254 is a catalytic residue.

This sequence belongs to the tubulin family. Dimer of alpha and beta chains. A typical microtubule is a hollow water-filled tube with an outer diameter of 25 nm and an inner diameter of 15 nM. Alpha-beta heterodimers associate head-to-tail to form protofilaments running lengthwise along the microtubule wall with the beta-tubulin subunit facing the microtubule plus end conferring a structural polarity. Microtubules usually have 13 protofilaments but different protofilament numbers can be found in some organisms and specialized cells. Mg(2+) serves as cofactor. In terms of processing, undergoes a tyrosination/detyrosination cycle, the cyclic removal and re-addition of a C-terminal tyrosine residue by the enzymes tubulin tyrosine carboxypeptidase (TTCP) and tubulin tyrosine ligase (TTL), respectively. Acetylation of alpha chains at Lys-40 stabilizes microtubules and affects affinity and processivity of microtubule motors. This modification has a role in multiple cellular functions, ranging from cell motility, cell cycle progression or cell differentiation to intracellular trafficking and signaling.

The protein localises to the cytoplasm. Its subcellular location is the cytoskeleton. It catalyses the reaction GTP + H2O = GDP + phosphate + H(+). Functionally, tubulin is the major constituent of microtubules, a cylinder consisting of laterally associated linear protofilaments composed of alpha- and beta-tubulin heterodimers. Microtubules grow by the addition of GTP-tubulin dimers to the microtubule end, where a stabilizing cap forms. Below the cap, tubulin dimers are in GDP-bound state, owing to GTPase activity of alpha-tubulin. This chain is Tubulin alpha chain (TUBA), found in Prunus dulcis (Almond).